The primary structure comprises 182 residues: Isopentenyl-diphosphate Delta-isomerase (182 aa).

Positions 25 and 32 each coordinate Mn(2+). The Nudix hydrolase domain maps to 30 to 164; sequence LLHLAFSSWL…PWAFSPWMVM (135 aa). Cys67 is a catalytic residue. His69 lines the Mn(2+) pocket. A Mg(2+)-binding site is contributed by Glu87. Glu114 and Glu116 together coordinate Mn(2+). Glu116 is a catalytic residue.

It belongs to the IPP isomerase type 1 family. As to quaternary structure, homodimer. Mg(2+) is required as a cofactor. Requires Mn(2+) as cofactor.

Its subcellular location is the cytoplasm. The catalysed reaction is isopentenyl diphosphate = dimethylallyl diphosphate. It participates in isoprenoid biosynthesis; dimethylallyl diphosphate biosynthesis; dimethylallyl diphosphate from isopentenyl diphosphate: step 1/1. Functionally, catalyzes the 1,3-allylic rearrangement of the homoallylic substrate isopentenyl (IPP) to its highly electrophilic allylic isomer, dimethylallyl diphosphate (DMAPP). This chain is Isopentenyl-diphosphate Delta-isomerase, found in Escherichia coli O45:K1 (strain S88 / ExPEC).